A 222-amino-acid polypeptide reads, in one-letter code: Glutathione S-transferase A4 (222 aa).

An N-acetylmethionine modification is found at M1. One can recognise a GST N-terminal domain in the interval 3 to 83 (ARPKLHYPNG…YIADKHNLFG (81 aa)). Glutathione is bound by residues Y9, 54 to 55 (QV), and 67 to 68 (QT). The region spanning 85–208 (NLKERTLIDM…EPGSKKKPPP (124 aa)) is the GST C-terminal domain. Y212 is a binding site for substrate.

Belongs to the GST superfamily. Alpha family. In terms of assembly, homodimer. In terms of tissue distribution, expressed at a high level in brain, placenta, and skeletal muscle and much lower in lung and liver.

The protein resides in the cytoplasm. It catalyses the reaction RX + glutathione = an S-substituted glutathione + a halide anion + H(+). In terms of biological role, conjugation of reduced glutathione to a wide number of exogenous and endogenous hydrophobic electrophiles. This isozyme has a high catalytic efficiency with 4-hydroxyalkenals such as 4-hydroxynonenal (4-HNE). This chain is Glutathione S-transferase A4 (GSTA4), found in Homo sapiens (Human).